A 68-amino-acid chain; its full sequence is Beta-defensin 1 (68 aa).

An N-terminal signal peptide occupies residues 1–21 (MRTSYLLLFTLCLLLSEMASG). The propeptide occupies 22–32 (GNFLTGLGHRS). 3 cysteine pairs are disulfide-bonded: cysteine 37–cysteine 66, cysteine 44–cysteine 59, and cysteine 49–cysteine 67.

The protein belongs to the beta-defensin family. As to quaternary structure, monomer. Homodimer.

It is found in the secreted. The protein localises to the membrane. In terms of biological role, has bactericidal activity. May act as a ligand for C-C chemokine receptor CCR6. Positively regulates the sperm motility and bactericidal activity in a CCR6-dependent manner. Binds to CCR6 and triggers Ca2+ mobilization in the sperm which is important for its motility. The protein is Beta-defensin 1 (DEFB1) of Pan troglodytes (Chimpanzee).